The primary structure comprises 752 residues: Protein ORF24 (752 aa).

It belongs to the herpesviridae UL87 family. Interacts with ORF34.

Its function is as follows. Plays a role in the expression of late viral mRNAs together with ORF34. This Homo sapiens (Human) protein is Protein ORF24 (ORF24).